The sequence spans 631 residues: Phosphomethylpyrimidine synthase (631 aa).

Substrate is bound by residues Asn239, Met268, Tyr297, His333, Ser353–Gly355, Asp394–Arg397, and Glu433. A Zn(2+)-binding site is contributed by His437. A substrate-binding site is contributed by Tyr460. His501 contributes to the Zn(2+) binding site. [4Fe-4S] cluster contacts are provided by Cys581, Cys584, and Cys589.

This sequence belongs to the ThiC family. As to quaternary structure, homodimer. [4Fe-4S] cluster is required as a cofactor.

The catalysed reaction is 5-amino-1-(5-phospho-beta-D-ribosyl)imidazole + S-adenosyl-L-methionine = 4-amino-2-methyl-5-(phosphooxymethyl)pyrimidine + CO + 5'-deoxyadenosine + formate + L-methionine + 3 H(+). The protein operates within cofactor biosynthesis; thiamine diphosphate biosynthesis. Its function is as follows. Catalyzes the synthesis of the hydroxymethylpyrimidine phosphate (HMP-P) moiety of thiamine from aminoimidazole ribotide (AIR) in a radical S-adenosyl-L-methionine (SAM)-dependent reaction. The sequence is that of Phosphomethylpyrimidine synthase from Escherichia coli O157:H7.